Consider the following 152-residue polypeptide: Eukaryotic translation initiation factor 2 subunit 3 (152 aa).

The residue at position 1 (A1) is an N-acetylalanine. A GTP-binding site is contributed by 51-54 (NKID).

The protein belongs to the TRAFAC class translation factor GTPase superfamily. Classic translation factor GTPase family. EIF2G subfamily. Eukaryotic translation initiation factor 2 eIF2 is a heterotrimeric complex composed of an alpha (EIF2S1), a beta (EIF2S2) and a gamma (EIF2S3) chain. eIF2 is member of the 43S pre-initiation complex (43S PIC). Interacts (via C-terminus) with CDC123; the interaction is direct.

It is found in the cytoplasm. It localises to the cytosol. Member of the eIF2 complex that functions in the early steps of protein synthesis by forming a ternary complex with GTP and initiator tRNA. This complex binds to a 40S ribosomal subunit, followed by mRNA binding to form the 43S pre-initiation complex (43S PIC). Junction of the 60S ribosomal subunit to form the 80S initiation complex is preceded by hydrolysis of the GTP bound to eIF2 and release of an eIF2-GDP binary complex. In order for eIF2 to recycle and catalyze another round of initiation, the GDP bound to eIF2 must exchange with GTP by way of a reaction catalyzed by eIF-2B. This is Eukaryotic translation initiation factor 2 subunit 3 (EIF2S3) from Oryctolagus cuniculus (Rabbit).